The primary structure comprises 328 residues: Cytochrome c biogenesis protein CcsA (328 aa).

8 helical membrane passes run 13–33 (ISFS…LVNL), 46–66 (GIVI…IYSG), 73–93 (LYES…ISYF), 101–121 (LNAI…SGLL), 146–166 (MILG…LLVI), 234–254 (IISL…VWAN), 263–283 (WDPK…FLHI), and 295–315 (AIVA…VNLL).

The protein belongs to the CcmF/CycK/Ccl1/NrfE/CcsA family. As to quaternary structure, may interact with Ccs1.

It is found in the plastid. The protein resides in the chloroplast thylakoid membrane. Its function is as follows. Required during biogenesis of c-type cytochromes (cytochrome c6 and cytochrome f) at the step of heme attachment. The chain is Cytochrome c biogenesis protein CcsA from Arabis hirsuta (Hairy rock-cress).